Here is a 148-residue protein sequence, read N- to C-terminus: Protein PLANT CADMIUM RESISTANCE 9 (148 aa).

Residues 59–78 (LAGLMVVAMSSIGCGWYYAS) traverse the membrane as a helical segment.

This sequence belongs to the cornifelin family.

The protein resides in the membrane. May be involved in cadmium resistance. The sequence is that of Protein PLANT CADMIUM RESISTANCE 9 (PCR9) from Arabidopsis thaliana (Mouse-ear cress).